The chain runs to 222 residues: Tetratricopeptide repeat protein 9A (222 aa).

2 disordered regions span residues 1 to 49 (MERK…AAAE) and 88 to 116 (KGLL…GRLS). A TPR 1 repeat occupies 56-89 (RAHEFKSQGAQCYKDKKFREAIGKYHRALLELKG). Ser105 carries the phosphoserine modification. TPR repeat units follow at residues 125–160 (AIEI…LKKE) and 161–194 (GENF…RTQQ).

Belongs to the TTC9 family.

This chain is Tetratricopeptide repeat protein 9A (TTC9), found in Homo sapiens (Human).